We begin with the raw amino-acid sequence, 369 residues long: Core histone macro-H2A.1 (369 aa).

Residues 2 to 117 form the Histone H2A domain; sequence SSRGGKKKST…NIHPELLAKK (116 aa). 2 positions are modified to N6-lactoyllysine; alternate: Lys-7 and Lys-9. At Lys-18 the chain carries N6-methyllysine. Lys-116 is modified (N6-acetyllysine; alternate). A Glycyl lysine isopeptide (Lys-Gly) (interchain with G-Cter in ubiquitin); alternate cross-link involves residue Lys-116. A Glycyl lysine isopeptide (Lys-Gly) (interchain with G-Cter in ubiquitin) cross-link involves residue Lys-117. N6-acetyllysine; alternate is present on Lys-123. Residue Lys-123 is modified to N6,N6-dimethyllysine; alternate. Lys-123 participates in a covalent cross-link: Glycyl lysine isopeptide (Lys-Gly) (interchain with G-Cter in SUMO2); alternate. The disordered stretch occupies residues 128–180; it reads ITPPPAKKAKSPSQKKPVSKKAGGKKGARKSKKKQGEVSKAASADSTTEGTPA. Thr-129 carries the phosphothreonine modification. Positions 144–160 are enriched in basic residues; sequence PVSKKAGGKKGARKSKK. Lys-167 is covalently cross-linked (Glycyl lysine isopeptide (Lys-Gly) (interchain with G-Cter in SUMO2)). Phosphoserine occurs at positions 170 and 173. Thr-178 carries the phosphothreonine modification. The 184-residue stretch at 184 to 367 folds into the Macro domain; it reads TVLSTKSLFL…IYVQEMAKLD (184 aa). Lys-189 participates in a covalent cross-link: Glycyl lysine isopeptide (Lys-Gly) (interchain with G-Cter in SUMO2). 8 residues coordinate a glycoprotein: Asp-203, Ile-204, Val-226, Ser-275, Gly-312, Ser-313, Gly-314, and Asn-316. A Glycyl lysine isopeptide (Lys-Gly) (interchain with G-Cter in SUMO2) cross-link involves residue Lys-320.

Belongs to the histone H2A family. As to quaternary structure, the nucleosome is a histone octamer containing two molecules each of H2A, H2B, H3 and H4 assembled in one H3-H4 heterotetramer and two H2A-H2B heterodimers. Interacts with HDAC1 and HDAC2. Interacts with SPOP. Part of a complex consisting of MACROH2A1, CUL3 and SPOP. Interacts with PARP1. Post-translationally, monoubiquitinated at either Lys-116 or Lys-117. May also be polyubiquitinated. Ubiquitination is mediated by the CUL3/SPOP E3 complex and does not promote proteasomal degradation. Instead, it is required for enrichment in inactive X chromosome chromatin. As to expression, widely expressed.

Its subcellular location is the nucleus. It localises to the chromosome. Functionally, variant histone H2A which replaces conventional H2A in a subset of nucleosomes where it represses transcription. Nucleosomes wrap and compact DNA into chromatin, limiting DNA accessibility to the cellular machineries which require DNA as a template. Histones thereby play a central role in transcription regulation, DNA repair, DNA replication and chromosomal stability. DNA accessibility is regulated via a complex set of post-translational modifications of histones, also called histone code, and nucleosome remodeling. Involved in stable X chromosome inactivation. Inhibits the binding of transcription factors, including NF-kappa-B, and interferes with the activity of remodeling SWI/SNF complexes. Inhibits histone acetylation by EP300 and recruits class I HDACs, which induces a hypoacetylated state of chromatin. In terms of biological role, isoform that specifically binds poly-ADP-ribose and O-acetyl-ADP-ribose and plays a key role in NAD(+) metabolism. Able to bind to the ends of poly-ADP-ribose chains created by PARP1 and cap them. This prevents PARP1 from further addition of ADP-ribose and thus limits the consumption of nuclear NAD(+), allowing the cell to maintain proper NAD(+) levels in both the nucleus and the mitochondria to promote proper mitochondrial respiration. Increases the expression of genes involved in redox metabolism, including SOD3. In contrast to isoform 1, does not bind poly-ADP-ribose. Represses SOD3 gene expression. This is Core histone macro-H2A.1 from Homo sapiens (Human).